Here is a 233-residue protein sequence, read N- to C-terminus: MVNIPPAEELAGRVAVVIDVLRATTTICTALANGADTVVPILSPEEAFQVARDNPDRQFLLGGERKAVLIPGFHCDNSPLEYTEARVKGRPILFTTTNGTRAIRRAAGADRVYIASLLNAPAVGRELARLEVDVAICCAGTHDQFSLEDTVCAGAILEYMAGPDRPVETNDMGLVARELFRRYDGRLADLLHLSSHGQNLVRLGMQDDLLFCAQLGTLTILPVFTEGQVVLLE.

The protein belongs to the ComB family. Requires Mg(2+) as cofactor.

It carries out the reaction (2R)-O-phospho-3-sulfolactate + H2O = (2R)-3-sulfolactate + phosphate. This is Probable 2-phosphosulfolactate phosphatase from Symbiobacterium thermophilum (strain DSM 24528 / JCM 14929 / IAM 14863 / T).